Here is a 406-residue protein sequence, read N- to C-terminus: Phosphoglycerate kinase (406 aa).

Substrate is bound by residues 22 to 24, R37, 60 to 63, R119, and R152; these read DLN and HLGN. ATP is bound by residues K202, E325, and 355–358; that span reads GGDT.

The protein belongs to the phosphoglycerate kinase family. Monomer.

Its subcellular location is the cytoplasm. The catalysed reaction is (2R)-3-phosphoglycerate + ATP = (2R)-3-phospho-glyceroyl phosphate + ADP. The protein operates within carbohydrate degradation; glycolysis; pyruvate from D-glyceraldehyde 3-phosphate: step 2/5. This Orientia tsutsugamushi (strain Ikeda) (Rickettsia tsutsugamushi) protein is Phosphoglycerate kinase.